Consider the following 432-residue polypeptide: Trigger factor (432 aa).

Residues 161–246 (DDRVTIDFVG…LKKVENMVLP (86 aa)) enclose the PPIase FKBP-type domain.

It belongs to the FKBP-type PPIase family. Tig subfamily.

The protein resides in the cytoplasm. It catalyses the reaction [protein]-peptidylproline (omega=180) = [protein]-peptidylproline (omega=0). Functionally, involved in protein export. Acts as a chaperone by maintaining the newly synthesized protein in an open conformation. Functions as a peptidyl-prolyl cis-trans isomerase. This Haemophilus influenzae (strain PittGG) protein is Trigger factor.